We begin with the raw amino-acid sequence, 257 residues long: UPF0246 protein CV_1250 (257 aa).

The protein belongs to the UPF0246 family.

The protein is UPF0246 protein CV_1250 of Chromobacterium violaceum (strain ATCC 12472 / DSM 30191 / JCM 1249 / CCUG 213 / NBRC 12614 / NCIMB 9131 / NCTC 9757 / MK).